A 248-amino-acid polypeptide reads, in one-letter code: 1-(5-phosphoribosyl)-5-[(5-phosphoribosylamino)methylideneamino] imidazole-4-carboxamide isomerase (248 aa).

D8 acts as the Proton acceptor in catalysis. The Proton donor role is filled by D129.

It belongs to the HisA/HisF family.

It is found in the cytoplasm. The enzyme catalyses 1-(5-phospho-beta-D-ribosyl)-5-[(5-phospho-beta-D-ribosylamino)methylideneamino]imidazole-4-carboxamide = 5-[(5-phospho-1-deoxy-D-ribulos-1-ylimino)methylamino]-1-(5-phospho-beta-D-ribosyl)imidazole-4-carboxamide. It functions in the pathway amino-acid biosynthesis; L-histidine biosynthesis; L-histidine from 5-phospho-alpha-D-ribose 1-diphosphate: step 4/9. This is 1-(5-phosphoribosyl)-5-[(5-phosphoribosylamino)methylideneamino] imidazole-4-carboxamide isomerase from Rhizobium etli (strain ATCC 51251 / DSM 11541 / JCM 21823 / NBRC 15573 / CFN 42).